A 278-amino-acid chain; its full sequence is NAD-capped RNA hydrolase NudC (278 aa).

R84 serves as a coordination point for substrate. Residues C114 and C117 each contribute to the Zn(2+) site. E127 is a binding site for substrate. Residue C132 participates in Zn(2+) binding. Residue Y140 coordinates substrate. In terms of domain architecture, Nudix hydrolase spans 141 to 264; it reads PRISPSMIVL…SIARYLIEAY (124 aa). Positions 174, 190, and 194 each coordinate a divalent metal cation. Residues 175–196 carry the Nudix box motif; it reads GFVEPGESAEDCVHREVMEEVQ. 208 to 215 is a binding site for substrate; the sequence is QCWPFPHS. E235 lines the a divalent metal cation pocket. A substrate-binding site is contributed by A257.

Belongs to the Nudix hydrolase family. NudC subfamily. As to quaternary structure, homodimer. Mg(2+) is required as a cofactor. It depends on Mn(2+) as a cofactor. Requires Zn(2+) as cofactor.

It catalyses the reaction a 5'-end NAD(+)-phospho-ribonucleoside in mRNA + H2O = a 5'-end phospho-adenosine-phospho-ribonucleoside in mRNA + beta-nicotinamide D-ribonucleotide + 2 H(+). The catalysed reaction is NAD(+) + H2O = beta-nicotinamide D-ribonucleotide + AMP + 2 H(+). It carries out the reaction NADH + H2O = reduced beta-nicotinamide D-ribonucleotide + AMP + 2 H(+). In terms of biological role, mRNA decapping enzyme that specifically removes the nicotinamide adenine dinucleotide (NAD) cap from a subset of mRNAs by hydrolyzing the diphosphate linkage to produce nicotinamide mononucleotide (NMN) and 5' monophosphate mRNA. The NAD-cap is present at the 5'-end of some mRNAs and stabilizes RNA against 5'-processing. Has preference for mRNAs with a 5'-end purine. Catalyzes the hydrolysis of a broad range of dinucleotide pyrophosphates. This Pseudomonas syringae pv. tomato (strain ATCC BAA-871 / DC3000) protein is NAD-capped RNA hydrolase NudC.